Reading from the N-terminus, the 89-residue chain is Large ribosomal subunit protein bL27 (89 aa).

Residues 1-22 (MAHKKAGGSSRNGRDSESKRLG) form a disordered region.

This sequence belongs to the bacterial ribosomal protein bL27 family.

This is Large ribosomal subunit protein bL27 from Bartonella henselae (strain ATCC 49882 / DSM 28221 / CCUG 30454 / Houston 1) (Rochalimaea henselae).